Consider the following 196-residue polypeptide: uncharacterized protein (196 aa).

A compositionally biased stretch (basic and acidic residues) spans 122 to 135 (SEIEKKQEPIERKT). The interval 122–150 (SEIEKKQEPIERKTSTTTNTESNQEKPLR) is disordered.

This is an uncharacterized protein from Leptospira interrogans.